The sequence spans 217 residues: 3-demethoxyubiquinol 3-hydroxylase (217 aa).

The Fe cation site is built by Glu-66, Glu-96, His-99, Glu-148, Glu-180, and His-183.

Belongs to the COQ7 family. The cofactor is Fe cation.

It localises to the cell membrane. The catalysed reaction is a 5-methoxy-2-methyl-3-(all-trans-polyprenyl)benzene-1,4-diol + AH2 + O2 = a 3-demethylubiquinol + A + H2O. It participates in cofactor biosynthesis; ubiquinone biosynthesis. Catalyzes the hydroxylation of 2-nonaprenyl-3-methyl-6-methoxy-1,4-benzoquinol during ubiquinone biosynthesis. The polypeptide is 3-demethoxyubiquinol 3-hydroxylase (Xanthomonas oryzae pv. oryzae (strain MAFF 311018)).